The sequence spans 118 residues: Large ribosomal subunit protein bL20 (118 aa).

This sequence belongs to the bacterial ribosomal protein bL20 family.

Its function is as follows. Binds directly to 23S ribosomal RNA and is necessary for the in vitro assembly process of the 50S ribosomal subunit. It is not involved in the protein synthesizing functions of that subunit. The polypeptide is Large ribosomal subunit protein bL20 (Psychrobacter arcticus (strain DSM 17307 / VKM B-2377 / 273-4)).